A 158-amino-acid polypeptide reads, in one-letter code: 6,7-dimethyl-8-ribityllumazine synthase (158 aa).

Residues Phe-23, 61-63 (SFE), and 85-87 (AVI) contribute to the 5-amino-6-(D-ribitylamino)uracil site. A (2S)-2-hydroxy-3-oxobutyl phosphate-binding site is contributed by 90–91 (ET). The active-site Proton donor is His-93. Residue Phe-118 participates in 5-amino-6-(D-ribitylamino)uracil binding. Residue Arg-132 coordinates (2S)-2-hydroxy-3-oxobutyl phosphate.

This sequence belongs to the DMRL synthase family.

The enzyme catalyses (2S)-2-hydroxy-3-oxobutyl phosphate + 5-amino-6-(D-ribitylamino)uracil = 6,7-dimethyl-8-(1-D-ribityl)lumazine + phosphate + 2 H2O + H(+). The protein operates within cofactor biosynthesis; riboflavin biosynthesis; riboflavin from 2-hydroxy-3-oxobutyl phosphate and 5-amino-6-(D-ribitylamino)uracil: step 1/2. Functionally, catalyzes the formation of 6,7-dimethyl-8-ribityllumazine by condensation of 5-amino-6-(D-ribitylamino)uracil with 3,4-dihydroxy-2-butanone 4-phosphate. This is the penultimate step in the biosynthesis of riboflavin. The sequence is that of 6,7-dimethyl-8-ribityllumazine synthase from Prochlorococcus marinus (strain MIT 9301).